The chain runs to 1224 residues: Potassium channel subfamily T member 1 (1224 aa).

The disordered stretch occupies residues Met1–Leu37. The Cytoplasmic segment spans residues Met1–Ser79. The segment covering Gly13–Pro27 has biased composition (low complexity). A helical transmembrane segment spans residues Leu80–Cys112. Residues Trp113–Arg139 are Extracellular-facing. Asn119 and Asn123 each carry an N-linked (GlcNAc...) asparagine glycan. The chain crosses the membrane as a helical span at residues Lys140–Leu164. Residues Ser165–Ser178 are Cytoplasmic-facing. The chain crosses the membrane as a helical span at residues Phe179 to Phe194. The Extracellular segment spans residues Trp195–Leu201. A helical transmembrane segment spans residues Phe202–Met219. At Ile220 to Ser232 the chain is on the cytoplasmic side. A helical membrane pass occupies residues Ala233–Glu260. Over Arg261 to Asn267 the chain is Extracellular. The pore-forming intramembrane region spans Leu268–Thr288. K(+)-binding residues include Val282 and Gly283. At Pro289–Lys290 the chain is on the extracellular side. A helical membrane pass occupies residues Ile291–Gln324. The Cytoplasmic portion of the chain corresponds to Lys325–Leu1224. Residues Glu338–Val474 enclose the RCK N-terminal 1 domain. Residues Leu499, His502, Ser524, and Asn526 each coordinate Na(+). A disordered region spans residues Gln644 to Pro675. The segment covering Thr663 to Arg673 has biased composition (polar residues). Positions 744 and 745 each coordinate Zn(2+). Residues Arg747 and Lys750 each contribute to the K(+) site. The Na(+) site is built by Arg747 and Lys750. The Zn(2+) site is built by Cys752 and His754. Residues Asn755, Tyr757, Tyr763, and Gly764 each coordinate K(+). Tyr757 is a binding site for Na(+). Phe765 contributes to the Na(+) binding site. The region spanning Asn767–Leu907 is the RCK N-terminal 2 domain. Residues Ser773, Leu804, Asp806, Gly828, and Asp851 each contribute to the K(+) site. Disordered regions lie at residues Arg1038 to Val1066 and Ser1198 to Leu1224. Low complexity-rich tracts occupy residues Gly1045–Thr1055 and Ser1198–Asn1215.

It belongs to the potassium channel family. Calcium-activated (TC 1.A.1.3) subfamily. KCa4.1/KCNT1 sub-subfamily. Homotetramer; which constitutes the Na(+)-activated K(+) channel. Interacts with KCNT2; these heterodimer channels differ from the homomers in their unitary conductance, kinetic behavior, subcellular localization, and response to activation of protein kinase C. Interacts (via C-terminus) with FMR1; this interaction alters gating properties of KCNT1. Interacts with CRBN via its cytoplasmic C-terminus. Post-translationally, phosphorylated by protein kinase C. Phosphorylation of the C-terminal domain increases channel activity. In terms of tissue distribution, enriched in the brainstem and olfactory bulb and detected at significant levels in four different brain regions.

It localises to the cell membrane. It carries out the reaction K(+)(in) = K(+)(out). Activated by high intracellular Na(+). In addition to activation by Na(+), is cooperatively activated by intracellular Cl(-) levels. Inhibited by Zn(2+). Activated upon stimulation of G-protein coupled receptors, such as CHRM1 and GRIA1. Sodium-activated K(+) channel. Acts as an important mediator of neuronal membrane excitability. Contributes to the delayed outward currents. Regulates neuronal bursting in sensory neurons. Contributes to synaptic development and plasticity. This chain is Potassium channel subfamily T member 1 (Kcnt1), found in Mus musculus (Mouse).